A 347-amino-acid chain; its full sequence is Phenylalanine--tRNA ligase alpha subunit (347 aa).

Position 261 (glutamate 261) interacts with Mg(2+).

It belongs to the class-II aminoacyl-tRNA synthetase family. Phe-tRNA synthetase alpha subunit type 1 subfamily. Tetramer of two alpha and two beta subunits. Requires Mg(2+) as cofactor.

The protein resides in the cytoplasm. It catalyses the reaction tRNA(Phe) + L-phenylalanine + ATP = L-phenylalanyl-tRNA(Phe) + AMP + diphosphate + H(+). In Streptococcus thermophilus (strain CNRZ 1066), this protein is Phenylalanine--tRNA ligase alpha subunit.